The primary structure comprises 544 residues: Putative glycerol-3-phosphate transporter 4 (544 aa).

The next 6 helical transmembrane spans lie at 28–47 (TFRY…YHAS), 121–141 (VAFL…GDSL), 156–176 (FFVG…WFFL), 181–201 (AAGL…GNWF), 218–238 (SVGN…GWGW), and 240–260 (FIAP…FLAA). A disordered region spans residues 281–313 (KRDVEEEEEEVEEDLGTDVEGDGEGSSGSGSGY). Acidic residues predominate over residues 285–303 (EEEEEEVEEDLGTDVEGDG). Helical transmembrane passes span 319–339 (VGLL…CLFF), 342–362 (LVAY…TIGG), 371–391 (GNLS…CGYI), 402–422 (AAAF…YGGV), 428–448 (ILLM…ITTA), 471–491 (AIID…TGFL), and 494–514 (LGWQ…GLLL).

Belongs to the major facilitator superfamily. Organophosphate:Pi antiporter (OPA) (TC 2.A.1.4) family.

The protein resides in the membrane. This is Putative glycerol-3-phosphate transporter 4 from Arabidopsis thaliana (Mouse-ear cress).